The chain runs to 532 residues: Neutral amino acid transporter A (532 aa).

An N-acetylmethionine modification is found at Met-1. Residues 1–29 (MEKSGETNGYLDGTQAEPAAGPRTPETAM) form a disordered region. The Cytoplasmic portion of the chain corresponds to 1–41 (MEKSGETNGYLDGTQAEPAAGPRTPETAMGKSQRCASFFRR). 3 consecutive transmembrane segments (helical) span residues 42–62 (HALV…GAAL), 88–108 (MIIL…LDAS), and 119–139 (AYFG…AFII). Residues 140–216 (KPGAGAQTLQ…VTKEKIPVVT (77 aa)) are Extracellular-facing. Asn-201 and Asn-206 each carry an N-linked (GlcNAc...) asparagine glycan. 6 consecutive transmembrane segments (helical) span residues 217-237 (DVEG…GVAL), 257-277 (ATMV…MFLI), 298-318 (IFAS…LVYF), 328-348 (FLLG…SSAT), 373-393 (IGAT…AVFI), and 418-438 (VGAA…LEAI). Residues 495-532 (EAIPNSKSEEETSPLVTHQNPAGPVAIAPELESKESVL) are disordered. Phosphoserine occurs at positions 507, 527, and 530.

It belongs to the dicarboxylate/amino acid:cation symporter (DAACS) (TC 2.A.23) family. SLC1A4 subfamily.

Its subcellular location is the membrane. It is found in the melanosome. The catalysed reaction is L-threonine(in) + Na(+)(in) = L-threonine(out) + Na(+)(out). It catalyses the reaction L-serine(in) + Na(+)(in) = L-serine(out) + Na(+)(out). The enzyme catalyses L-cysteine(in) + Na(+)(in) = L-cysteine(out) + Na(+)(out). It carries out the reaction L-alanine(in) + Na(+)(in) = L-alanine(out) + Na(+)(out). The catalysed reaction is L-proline(in) + Na(+)(in) = L-proline(out) + Na(+)(out). It catalyses the reaction 4-hydroxy-L-proline(in) + Na(+)(in) = 4-hydroxy-L-proline(out) + Na(+)(out). In terms of biological role, sodium-dependent neutral amino-acid transporter that mediates transport of alanine, serine, cysteine, proline, hydroxyproline and threonine. The chain is Neutral amino acid transporter A (Slc1a4) from Mus musculus (Mouse).